Reading from the N-terminus, the 176-residue chain is Adenine phosphoribosyltransferase (176 aa).

It belongs to the purine/pyrimidine phosphoribosyltransferase family. Homodimer.

It is found in the cytoplasm. The catalysed reaction is AMP + diphosphate = 5-phospho-alpha-D-ribose 1-diphosphate + adenine. It functions in the pathway purine metabolism; AMP biosynthesis via salvage pathway; AMP from adenine: step 1/1. Catalyzes a salvage reaction resulting in the formation of AMP, that is energically less costly than de novo synthesis. The sequence is that of Adenine phosphoribosyltransferase from Methylobacillus flagellatus (strain ATCC 51484 / DSM 6875 / VKM B-1610 / KT).